The sequence spans 675 residues: Heat shock 70 kDa protein, mitochondrial (675 aa).

The N-terminal 51 residues, 1 to 51, are a transit peptide targeting the mitochondrion; the sequence is MAAVLRSLRRRDVASATFSAYRSLTGSTKPAYVAQKWSCLARPFSSRPAGN. The tract at residues 638–675 is disordered; that stretch reads VSKIGEHMSGGSSGGSSAGGSQGGGDQAPEAEYEEVKK. The span at 648–663 shows a compositional bias: gly residues; it reads GSSGGSSAGGSQGGGD. Positions 666–675 are enriched in acidic residues; that stretch reads PEAEYEEVKK.

It belongs to the heat shock protein 70 family.

It is found in the mitochondrion. The protein is Heat shock 70 kDa protein, mitochondrial of Phaseolus vulgaris (Kidney bean).